We begin with the raw amino-acid sequence, 862 residues long: Taxadiene synthase (862 aa).

The Mg(2+) site is built by D613, D617, N757, T761, and E765. The DDXXD motif signature appears at 613–617; it reads DDMAD.

It belongs to the terpene synthase family. Mg(2+) serves as cofactor.

The enzyme catalyses (2E,6E,10E)-geranylgeranyl diphosphate = taxa-4(5),11(12)-diene + diphosphate. The protein operates within alkaloid biosynthesis; taxol biosynthesis; taxa-4(20),11-dien-5alpha-ol from geranylgeranyl diphosphate: step 1/2. Catalyzes the cyclization of the ubiquitous isoprenoid intermediate geranylgeranyl diphosphate to taxa-4,11-diene, the parent olefin with a taxane skeleton. In Taxus baccata (English yew), this protein is Taxadiene synthase (TDC1).